The primary structure comprises 124 residues: Secreted RxLR effector protein 49 (124 aa).

A signal peptide spans 1-22 (MIRRSPLVAVILFVAITHVVLA). A RxLR motif is present at residues 57–60 (RSLR).

Belongs to the RxLR effector family.

It localises to the secreted. The protein resides in the host cytoplasm. It is found in the host nucleus. In terms of biological role, effector that acts as a broad suppressor of cell death to interrupt plant immunity. Inhibits cell death induced by cell death-inducing proteins, including the PAMP elicitor INF1 from P.infestans. The sequence is that of Secreted RxLR effector protein 49 from Plasmopara viticola (Downy mildew of grapevine).